A 257-amino-acid polypeptide reads, in one-letter code: 5-oxoprolinase subunit A (257 aa).

This sequence belongs to the LamB/PxpA family. In terms of assembly, forms a complex composed of PxpA, PxpB and PxpC.

It catalyses the reaction 5-oxo-L-proline + ATP + 2 H2O = L-glutamate + ADP + phosphate + H(+). Catalyzes the cleavage of 5-oxoproline to form L-glutamate coupled to the hydrolysis of ATP to ADP and inorganic phosphate. The sequence is that of 5-oxoprolinase subunit A from Pectobacterium atrosepticum (strain SCRI 1043 / ATCC BAA-672) (Erwinia carotovora subsp. atroseptica).